A 354-amino-acid chain; its full sequence is Probable N-acetylmuramoyl-L-alanine amidase (354 aa).

Residues 1–39 (MVKVINNFVKVNQYDRPGLKLAAVKGIVMHWTATPGASA) form the signal peptide. Residues 40–152 (LNERNYFNGT…YDVTNKGCPT (113 aa)) enclose the N-acetylmuramoyl-L-alanine amidase domain.

It belongs to the N-acetylmuramoyl-L-alanine amidase 2 family.

Its subcellular location is the secreted. It catalyses the reaction Hydrolyzes the link between N-acetylmuramoyl residues and L-amino acid residues in certain cell-wall glycopeptides.. The protein is Probable N-acetylmuramoyl-L-alanine amidase of Bacillus licheniformis.